The chain runs to 484 residues: MKFIVKLFPEIMMKSKPVRMRFTKMLETNIRNVLKKVDESAKVQRQWDKIMVMVPDDRPDLIEAFGERLACIPGIAHVLQVNVSTFESVDDIYQQTLAVYKDQLAGKTFCVRVKRAGKHDFNSIEVERYVGGGLNQFTEAAGVRLKNPDMTVNLEIDNEQLYLVDKRIQGLGGFPMATQEDVLSLISGGFDSGVSSYQFIKRGSRTHYCFFNLGGDQHEIGVKQVAYHLWQKYGESHKVKFISVPFDPVVQEILERVDNGQMGVVLKRMMMRAAARVADKMGIQALVTGEAMGQVSSQTLTNLNVIDRCTEQLILRPLIAMDKQDIINISREIGTEDFAKSIPEYCGVISQKPTVKAVLSKVEAEEAKFSDDLIDRVIQDAVIIDIKEIATQMDTKITEAETVAAISADEVIIDVRAPEEEEKDPLEIEGIETKTIPFYKLATQFADLDKDKTYLLYCDRGVMSKLQALYLQEQGYSNVKVYRP.

A THUMP domain is found at glutamate 63–arginine 167. ATP is bound by residues leucine 185–isoleucine 186, lysine 267, glycine 289, and glutamine 298. An intrachain disulfide couples cysteine 346 to cysteine 458. The region spanning isoleucine 406–proline 484 is the Rhodanese domain. The Cysteine persulfide intermediate role is filled by cysteine 458.

This sequence belongs to the ThiI family.

It is found in the cytoplasm. The catalysed reaction is [ThiI sulfur-carrier protein]-S-sulfanyl-L-cysteine + a uridine in tRNA + 2 reduced [2Fe-2S]-[ferredoxin] + ATP + H(+) = [ThiI sulfur-carrier protein]-L-cysteine + a 4-thiouridine in tRNA + 2 oxidized [2Fe-2S]-[ferredoxin] + AMP + diphosphate. The enzyme catalyses [ThiS sulfur-carrier protein]-C-terminal Gly-Gly-AMP + S-sulfanyl-L-cysteinyl-[cysteine desulfurase] + AH2 = [ThiS sulfur-carrier protein]-C-terminal-Gly-aminoethanethioate + L-cysteinyl-[cysteine desulfurase] + A + AMP + 2 H(+). It participates in cofactor biosynthesis; thiamine diphosphate biosynthesis. Catalyzes the ATP-dependent transfer of a sulfur to tRNA to produce 4-thiouridine in position 8 of tRNAs, which functions as a near-UV photosensor. Also catalyzes the transfer of sulfur to the sulfur carrier protein ThiS, forming ThiS-thiocarboxylate. This is a step in the synthesis of thiazole, in the thiamine biosynthesis pathway. The sulfur is donated as persulfide by IscS. The protein is tRNA sulfurtransferase of Shewanella piezotolerans (strain WP3 / JCM 13877).